Here is a 72-residue protein sequence, read N- to C-terminus: Bradykinin-potentiating peptide BmKbpp (72 aa).

Positions 1-22 (MNKKTLLVIFFVTMLIVDEVNS) are cleaved as a signal peptide. The propeptide occupies 70-72 (RRR).

This sequence belongs to the non-disulfide-bridged peptide (NDBP) superfamily. Long chain multifunctional peptide (group 2) family. As to expression, expressed by the venom gland.

It is found in the secreted. Its function is as follows. Amphipathic peptide that shows bradykinin potentiating activity and antimicrobial activities against bacteria and fungi. Has higher antibacterial activities against Gram-negative than against Gram-positive bacteria. Also inhibits NADPH oxidase-dependent superoxide production (IC(50) is 0.4 uM on granulocytes stimulated with PMA, IC(50) is 0.51 uM on HL-60 cells undifferentiated and IC(50) is 0.53 uM on HL-60 cells treated with DMSO). The C-terminal peptide shows a higher bradykinin potentiating activity than the complete peptide. The polypeptide is Bradykinin-potentiating peptide BmKbpp (Olivierus martensii (Manchurian scorpion)).